Reading from the N-terminus, the 373-residue chain is Forkhead box protein F1 (373 aa).

The disordered stretch occupies residues 1–51; that stretch reads MTAEIQQPPSQPPAQSSPMSAATDKHGGQPSVMESANCATKTKKTNAGIRR. Residues 13–22 show a composition bias toward low complexity; it reads PAQSSPMSAA. Residues 54–148 constitute a DNA-binding region (fork-head); it reads KPPYSYIALI…EEGSFRRRPR (95 aa). Disordered stretches follow at residues 236-255 and 283-306; these read GSSG…LGGG and QPLS…SLDQ. Residues 286 to 306 are compositionally biased toward low complexity; that stretch reads SPCNSAANPLSSSLSSHSLDQ.

The protein localises to the nucleus. In terms of biological role, probable transcription factor. Required for smooth muscle (visceral mesoderm) differentiation during gut development. Also required for normal proliferation of the lateral plate mesoderm. Acts as a downstream mediator of bmp4-signaling. The sequence is that of Forkhead box protein F1 from Xenopus tropicalis (Western clawed frog).